A 365-amino-acid chain; its full sequence is Caffeic acid 3-O-methyltransferase (365 aa).

Residue N133 coordinates (E)-ferulate. 6 residues coordinate S-adenosyl-L-homocysteine: G210, D233, D253, M254, M266, and K267. H271 serves as the catalytic Proton acceptor. D272 lines the (E)-5-hydroxyferulate pocket.

Belongs to the class I-like SAM-binding methyltransferase superfamily. Cation-independent O-methyltransferase family. COMT subfamily. In terms of assembly, homodimer.

It catalyses the reaction (E)-caffeate + S-adenosyl-L-methionine = (E)-ferulate + S-adenosyl-L-homocysteine + H(+). It carries out the reaction (E)-5-hydroxyferulate + S-adenosyl-L-methionine = (E)-sinapate + S-adenosyl-L-homocysteine + H(+). The protein operates within aromatic compound metabolism; phenylpropanoid biosynthesis. Inhibited by Cu(2+), and to a lesser extent by Ni(2+), Mn(2+), Co(2+), Fe(3+) and Zn(2+). Unaffected by Fe(2+) and Mg(2+). Functionally, catalyzes the conversion of caffeic acid to ferulic acid and of 5-hydroxyferulic acid to sinapic acid. The resulting products may subsequently be converted to the corresponding alcohols that are incorporated into lignins. The sequence is that of Caffeic acid 3-O-methyltransferase from Ammi majus (Bishop's weed).